Here is a 178-residue protein sequence, read N- to C-terminus: Methyltransferase flvH (178 aa).

A Post-SET domain is found at 120–136; sequence QPFNCFCGSQNCLGLIA. Zn(2+) is bound by residues cysteine 124, cysteine 126, and cysteine 131.

The protein belongs to the class V-like SAM-binding methyltransferase superfamily.

The catalysed reaction is L-lysine + 2 S-adenosyl-L-methionine = N(6),N(6)-dimethyl-L-lysine + 2 S-adenosyl-L-homocysteine + 2 H(+). It participates in secondary metabolite biosynthesis; terpenoid biosynthesis. In terms of biological role, methyltransferase; part of the gene cluster that mediates the biosynthesis of flavunoidine, an alkaloidal terpenoid with a tetracyclic cage-like core connected to dimethylcadaverine via a C-N bond and acylated with 5,5-dimethyl-L-pipecolate. The tetracyclic core is synthesized by the terpene cyclase flvE and the cytochrome P450 monooxygenase flvD. The terpene cyclase flvE catalyzes the cyclization of farnesyl pyrophosphate (FPP) to form (1R,4R,5S)-(+)-acoradiene and the cytochrome P450 monooxygenase flvD is then responsible for oxidative conversion of (1R,4R,5S)-(+)-acoradiene into the tetracyclic cage present in the final product flavunoidine. In parallel, the N-methyltransferase flvH dimethylates L-lysine to give N,N-dimethyl-L-Lysin which is decarboxylated by flvG to afford dimethylcadaverine. The terpene cyclase-like protein flvF is the enzyme that attaches the dimethylcadaverine precusor at the C-7 of the tetracyclic cage to yield pre-flavunoidine. The cytochrome monooxygenase flvC hydroxylates the C-10 position of pre-flavunoidine whereas the NRPS flvI acylates the terpenoid core at the hydroxylated C-10 with dimethylpipecolate to yield final flavunoidine. The bifunctional enzyme flvA and the dehydrogenase flvB are responsible for the synthesis of the dimethylpipecolate precursor. The PLP-dependent lyase domain of flvA might use L-O-acetyl-homoserine and alpha-keto-isovalerate to form an intermediary ketone that can cyclize intramolecularly to yield an imine. The imine can be reduced by flvB to yield the 6-carboxylated pipecolate. The C-terminal alpha-KG-dependent oxygenase domain of flvA is then proposed to catalyze the decarboxylation to yield dimethylpipecolate. The sequence is that of Methyltransferase flvH from Aspergillus flavus (strain ATCC 200026 / FGSC A1120 / IAM 13836 / NRRL 3357 / JCM 12722 / SRRC 167).